The sequence spans 92 residues: Putative lambdoid prophage defective integrase (92 aa).

This sequence belongs to the 'phage' integrase family.

This Escherichia coli O157:H7 protein is Putative lambdoid prophage defective integrase (intG).